Consider the following 412-residue polypeptide: Phosphoglycerate kinase, plasmid (412 aa).

Residues 39–41 (DLN), Arg-55, 78–81 (HLGR), Arg-133, and Arg-166 contribute to the substrate site. Residues Lys-217, Glu-339, and 365–368 (GGDT) contribute to the ATP site.

This sequence belongs to the phosphoglycerate kinase family. In terms of assembly, monomer.

It is found in the cytoplasm. It catalyses the reaction (2R)-3-phosphoglycerate + ATP = (2R)-3-phospho-glyceroyl phosphate + ADP. Its pathway is carbohydrate biosynthesis; Calvin cycle. In Cupriavidus necator (strain ATCC 17699 / DSM 428 / KCTC 22496 / NCIMB 10442 / H16 / Stanier 337) (Ralstonia eutropha), this protein is Phosphoglycerate kinase, plasmid (cbbKP).